The sequence spans 894 residues: Histone-lysine N-methyltransferase EZ2 (894 aa).

Residues 1–11 are compositionally biased toward low complexity; that stretch reads MASSSKASDSS. 3 disordered regions span residues 1–25, 395–447, and 491–513; these read MASS…GKDA, SSVS…KRQK, and KKTS…VGRQ. A compositionally biased stretch (polar residues) spans 395-421; it reads SSVSAEESTTTPSADISETENVSSDLP. Residues 425 to 435 are compositionally biased toward basic residues; it reads LRKHKISKHGP. Polar residues predominate over residues 503–513; that stretch reads PATTMENVGRQ. The SANT domain occupies 527–577; it reads TLSCWSALERDLYLKGIEIFGKNSCLIARNLLSGLKTCIEVANYMYNNGAA. The 105-residue stretch at 627-731 folds into the CXC domain; it reads AGHPTVRKRT…SLGEPLARGD (105 aa). The 116-residue stretch at 746–861 folds into the SET domain; it reads QRILLGRSDV…ASEELFYDYR (116 aa). Residues 867 to 894 form a disordered region; sequence APAWARRPEGSKKDEASVSHRRAHKVAR. Over residues 872–884 the composition is skewed to basic and acidic residues; that stretch reads RRPEGSKKDEASV. Positions 885-894 are enriched in basic residues; sequence SHRRAHKVAR.

It belongs to the class V-like SAM-binding methyltransferase superfamily. Histone-lysine methyltransferase family. EZ subfamily.

It localises to the nucleus. The enzyme catalyses L-lysyl(27)-[histone H3] + 3 S-adenosyl-L-methionine = N(6),N(6),N(6)-trimethyl-L-lysyl(27)-[histone H3] + 3 S-adenosyl-L-homocysteine + 3 H(+). Its function is as follows. Polycomb group (PcG) protein. Catalytic subunit of some PcG multiprotein complex, which methylates 'Lys-27' of histone H3, leading to transcriptional repression of the affected target genes. PcG proteins are not required to initiate repression, but to maintain it during later stages of development. The protein is Histone-lysine N-methyltransferase EZ2 (EZ2) of Zea mays (Maize).